The chain runs to 89 residues: Small ribosomal subunit protein uS15 (89 aa).

It belongs to the universal ribosomal protein uS15 family. As to quaternary structure, part of the 30S ribosomal subunit. Forms a bridge to the 50S subunit in the 70S ribosome, contacting the 23S rRNA.

One of the primary rRNA binding proteins, it binds directly to 16S rRNA where it helps nucleate assembly of the platform of the 30S subunit by binding and bridging several RNA helices of the 16S rRNA. Functionally, forms an intersubunit bridge (bridge B4) with the 23S rRNA of the 50S subunit in the ribosome. This is Small ribosomal subunit protein uS15 from Agrobacterium fabrum (strain C58 / ATCC 33970) (Agrobacterium tumefaciens (strain C58)).